Reading from the N-terminus, the 189-residue chain is ATP-dependent protease subunit HslV (189 aa).

Thr12 is an active-site residue. Na(+) contacts are provided by Ala172, Cys175, and Thr178.

The protein belongs to the peptidase T1B family. HslV subfamily. In terms of assembly, a double ring-shaped homohexamer of HslV is capped on each side by a ring-shaped HslU homohexamer. The assembly of the HslU/HslV complex is dependent on binding of ATP.

It is found in the cytoplasm. It carries out the reaction ATP-dependent cleavage of peptide bonds with broad specificity.. Allosterically activated by HslU binding. Protease subunit of a proteasome-like degradation complex believed to be a general protein degrading machinery. This chain is ATP-dependent protease subunit HslV, found in Anaplasma phagocytophilum (strain HZ).